The following is a 249-amino-acid chain: Vacuolar iron transporter 1 (249 aa).

At 1-36 the chain is on the cytoplasmic side; the sequence is MADGANDGGNPGAEEQQRLLDQHKEAHFTAGEIVRD. Residues 37–57 form a helical membrane-spanning segment; sequence IIIGVSDGLTVPFALAAGLSG. The Vacuolar portion of the chain corresponds to 58-63; sequence ANASSS. A helical membrane pass occupies residues 64 to 84; that stretch reads IVLTAGIAEVAAGAISMGLGG. Topologically, residues 85–170 are cytoplasmic; it reads YLAAKSEADN…PKRALQSAFT (86 aa). Residues 90-165 form a cytoplasmic metal binding domain (MBD) region; that stretch reads SEADNYAREL…LEKPDPKRAL (76 aa). Residues Glu-102, Glu-105, Glu-113, Glu-116, Met-149, and Glu-153 each contribute to the Fe cation site. A helical transmembrane segment spans residues 171–191; the sequence is IAIAYVLGGLVPLIPYMFIPV. Residues 192–194 lie on the Vacuolar side of the membrane; it reads ARK. Residues 195–215 form a helical membrane-spanning segment; that stretch reads AVVASVILTLMALLIFGYAKG. The Cytoplasmic portion of the chain corresponds to 216–226; it reads YFTDNKPFKSA. A helical membrane pass occupies residues 227–247; the sequence is LQTALIGAIASAAAFGMAKAV. Residues 248–249 lie on the Vacuolar side of the membrane; it reads QS.

This sequence belongs to the CCC1 family. In terms of assembly, homodimer. The dimeric interaction is mediated by both the transmembrane domains (TMDs) and the cytoplasmic metal binding domain (MBD).

It is found in the vacuole membrane. It catalyses the reaction Fe(2+)(in) = Fe(2+)(out). Transport of iron ions is inhibited by zinc ions. Functionally, vacuolar iron transporter involved in the transfer of iron ions from the cytosol to the vacuole for intracellular iron storage. Can transport cobalt ions from the cytosol to the vacuole. The chain is Vacuolar iron transporter 1 from Eucalyptus grandis (Flooded gum).